The primary structure comprises 457 residues: Putative movement protein (457 aa).

Disordered stretches follow at residues 265–284 (SGSRNLGRRKPQRGRPLERS), 293–312 (FRSQDERVEHQGLSTDSDFE), and 345–457 (ARQD…PPSV). Positions 411-426 (RAGGGEIHGGSEGGGV) are enriched in gly residues. The span at 448–457 (YKQHDLPPSV) shows a compositional bias: basic and acidic residues.

It belongs to the tobamoviruses movement protein family.

Suppressor of viral-induced RNA silencing. The protein is Putative movement protein of Crataegus (hawthorn).